A 40-amino-acid polypeptide reads, in one-letter code: Alpha-conotoxin-like Qc1.4b (40 aa).

The propeptide occupies 1-19; that stretch reads SDGRNTAANDKASDLMALR. Intrachain disulfides connect Cys22/Cys28 and Cys23/Cys36. A lacks the Ser-Xaa-Pro motif that is crucial for potent interaction with nAChR region spans residues 24–26; sequence PNP. Cys36 carries the post-translational modification Cysteine amide. Residues 37–40 constitute a propeptide that is removed on maturation; it reads GGGR.

The protein belongs to the conotoxin A superfamily. Expressed by the venom duct.

Its subcellular location is the secreted. Alpha-conotoxins act on postsynaptic membranes, they bind to the nicotinic acetylcholine receptors (nAChR) and thus inhibit them. Has possibly a distinct nAChR binding mode from other alpha-conotoxins, due to a different three residue motif (lacks the Ser-Xaa-Pro motif). The chain is Alpha-conotoxin-like Qc1.4b from Conus quercinus (Oak cone).